The primary structure comprises 290 residues: Shikimate dehydrogenase (NADP(+)) (290 aa).

Residues 22-24 (SLS) and threonine 68 each bind shikimate. The Proton acceptor role is filled by lysine 72. An NADP(+)-binding site is contributed by aspartate 84. Asparagine 93 and aspartate 108 together coordinate shikimate. NADP(+) contacts are provided by residues 133–137 (GSGGS) and isoleucine 228. Tyrosine 230 contributes to the shikimate binding site. Glycine 251 provides a ligand contact to NADP(+).

The protein belongs to the shikimate dehydrogenase family. As to quaternary structure, homodimer.

It catalyses the reaction shikimate + NADP(+) = 3-dehydroshikimate + NADPH + H(+). Its pathway is metabolic intermediate biosynthesis; chorismate biosynthesis; chorismate from D-erythrose 4-phosphate and phosphoenolpyruvate: step 4/7. Its function is as follows. Involved in the biosynthesis of the chorismate, which leads to the biosynthesis of aromatic amino acids. Catalyzes the reversible NADPH linked reduction of 3-dehydroshikimate (DHSA) to yield shikimate (SA). The chain is Shikimate dehydrogenase (NADP(+)) from Leptospira interrogans serogroup Icterohaemorrhagiae serovar Lai (strain 56601).